The sequence spans 100 residues: Urease subunit gamma (100 aa).

This sequence belongs to the urease gamma subunit family. In terms of assembly, heterotrimer of UreA (gamma), UreB (beta) and UreC (alpha) subunits. Three heterotrimers associate to form the active enzyme.

It localises to the cytoplasm. The catalysed reaction is urea + 2 H2O + H(+) = hydrogencarbonate + 2 NH4(+). The protein operates within nitrogen metabolism; urea degradation; CO(2) and NH(3) from urea (urease route): step 1/1. The protein is Urease subunit gamma of Picosynechococcus sp. (strain ATCC 27264 / PCC 7002 / PR-6) (Agmenellum quadruplicatum).